The primary structure comprises 240 residues: NAD(P)H-quinone oxidoreductase subunit K (240 aa).

[4Fe-4S] cluster-binding residues include C55, C56, C120, and C151.

The protein belongs to the complex I 20 kDa subunit family. NDH-1 can be composed of about 15 different subunits; different subcomplexes with different compositions have been identified which probably have different functions. Requires [4Fe-4S] cluster as cofactor.

Its subcellular location is the cellular thylakoid membrane. It catalyses the reaction a plastoquinone + NADH + (n+1) H(+)(in) = a plastoquinol + NAD(+) + n H(+)(out). The enzyme catalyses a plastoquinone + NADPH + (n+1) H(+)(in) = a plastoquinol + NADP(+) + n H(+)(out). Its function is as follows. NDH-1 shuttles electrons from an unknown electron donor, via FMN and iron-sulfur (Fe-S) centers, to quinones in the respiratory and/or the photosynthetic chain. The immediate electron acceptor for the enzyme in this species is believed to be plastoquinone. Couples the redox reaction to proton translocation, and thus conserves the redox energy in a proton gradient. Cyanobacterial NDH-1 also plays a role in inorganic carbon-concentration. This is NAD(P)H-quinone oxidoreductase subunit K from Trichodesmium erythraeum (strain IMS101).